The following is a 126-amino-acid chain: Glycine cleavage system H protein (126 aa).

The region spanning 22–104 (KLRIGITDFA…YEKAWMIVIE (83 aa)) is the Lipoyl-binding domain. Lys63 carries the post-translational modification N6-lipoyllysine.

Belongs to the GcvH family. In terms of assembly, the glycine cleavage system is composed of four proteins: P, T, L and H. Requires (R)-lipoate as cofactor.

Its function is as follows. The glycine cleavage system catalyzes the degradation of glycine. The H protein shuttles the methylamine group of glycine from the P protein to the T protein. Functionally, is also involved in protein lipoylation via its role as an octanoyl/lipoyl carrier protein intermediate. The chain is Glycine cleavage system H protein from Oceanobacillus iheyensis (strain DSM 14371 / CIP 107618 / JCM 11309 / KCTC 3954 / HTE831).